The chain runs to 208 residues: MKVVEVKHPLVKHKIGLMREGDISTKRFRELATEVGSLLTYEATADFETEKVTIEGWNGPVEVDQIKGKKVTVVPILRAGLGMMDGVLEHMPSARISVVGIYRDEETLEPVPYFNKLASNIDERIALVVDPMLATGGSMIATIDLLKEKGCQSIKVLVLVAAPEGIEALEKAHPDVELYTAAIDEKLNDKGYIVPGLGDAGDKIFGTK.

Residues Arg78, Arg103, and 130–138 (DPMLATGGS) contribute to the 5-phospho-alpha-D-ribose 1-diphosphate site. Residues Ile193 and 198-200 (GDA) contribute to the uracil site. Asp199 is a binding site for 5-phospho-alpha-D-ribose 1-diphosphate.

The protein belongs to the UPRTase family. It depends on Mg(2+) as a cofactor.

It carries out the reaction UMP + diphosphate = 5-phospho-alpha-D-ribose 1-diphosphate + uracil. It participates in pyrimidine metabolism; UMP biosynthesis via salvage pathway; UMP from uracil: step 1/1. With respect to regulation, allosterically activated by GTP. Catalyzes the conversion of uracil and 5-phospho-alpha-D-ribose 1-diphosphate (PRPP) to UMP and diphosphate. This chain is Uracil phosphoribosyltransferase, found in Vibrio parahaemolyticus serotype O3:K6 (strain RIMD 2210633).